Consider the following 134-residue polypeptide: MATTFSASVSMQATSLATTTRISFQKPVLVSNHGRTNLSFNLSRTRLSISCAAKQETVEKVSEIVKKQLSLKDDQQVVAETKFVDLGADSLDTVEIVMGLEEEFGIQMAEEKAQKIATVEQAAELIEELMQAKK.

The transit peptide at 1–51 directs the protein to the chloroplast; that stretch reads MATTFSASVSMQATSLATTTRISFQKPVLVSNHGRTNLSFNLSRTRLSISC. In terms of domain architecture, Carrier spans 55–130; the sequence is QETVEKVSEI…QAAELIEELM (76 aa). Serine 90 carries the post-translational modification O-(pantetheine 4'-phosphoryl)serine.

This sequence belongs to the acyl carrier protein (ACP) family. 4'-phosphopantetheine is transferred from CoA to a specific serine of apo-ACP by acpS. This modification is essential for activity because fatty acids are bound in thioester linkage to the sulfhydryl of the prosthetic group. As to expression, seed.

It is found in the plastid. Its subcellular location is the chloroplast. Its pathway is lipid metabolism; fatty acid biosynthesis. Carrier of the growing fatty acid chain in fatty acid biosynthesis. This is Acyl carrier protein, chloroplastic (ACL1.C1) from Brassica napus (Rape).